The primary structure comprises 842 residues: Protein P (842 aa).

Positions 1–177 (MPLSYQHFRR…FCGSPYSWEQ (177 aa)) are terminal protein domain (TP). Positions 178 to 345 (ELHHGAFLDG…YCLTHLVNLL (168 aa)) are spacer. Residues 205–271 (SRPPVGSSIQ…RHAKNIASRP (67 aa)) form a disordered region. Over residues 223–239 (GPQSQQRPLDGSQQGRS) the composition is skewed to polar residues. Residues 346–689 (EDWGPCTEHG…YLNLYPVARQ (344 aa)) are polymerase/reverse transcriptase domain (RT). Positions 356 to 599 (KHHIRIPRTP…YSLNFMGYVI (244 aa)) constitute a Reverse transcriptase domain. 3 residues coordinate Mg(2+): Asp428, Asp550, and Asp551.

This sequence belongs to the hepadnaviridae P protein family.

The enzyme catalyses DNA(n) + a 2'-deoxyribonucleoside 5'-triphosphate = DNA(n+1) + diphosphate. The catalysed reaction is Endonucleolytic cleavage to 5'-phosphomonoester.. Its activity is regulated as follows. Activated by host HSP70 and HSP40 in vitro to be able to bind the epsilon loop of the pgRNA. Because deletion of the RNase H region renders the protein partly chaperone-independent, the chaperones may be needed indirectly to relieve occlusion of the RNA-binding site by this domain. Inhibited by several reverse-transcriptase inhibitors: Lamivudine, Adefovir and Entecavir. Its function is as follows. Multifunctional enzyme that converts the viral RNA genome into dsDNA in viral cytoplasmic capsids. This enzyme displays a DNA polymerase activity that can copy either DNA or RNA templates, and a ribonuclease H (RNase H) activity that cleaves the RNA strand of RNA-DNA heteroduplexes in a partially processive 3'- to 5'-endonucleasic mode. Neo-synthesized pregenomic RNA (pgRNA) are encapsidated together with the P protein, and reverse-transcribed inside the nucleocapsid. Initiation of reverse-transcription occurs first by binding the epsilon loop on the pgRNA genome, and is initiated by protein priming, thereby the 5'-end of (-)DNA is covalently linked to P protein. Partial (+)DNA is synthesized from the (-)DNA template and generates the relaxed circular DNA (RC-DNA) genome. After budding and infection, the RC-DNA migrates in the nucleus, and is converted into a plasmid-like covalently closed circular DNA (cccDNA). The activity of P protein does not seem to be necessary for cccDNA generation, and is presumably released from (+)DNA by host nuclear DNA repair machinery. The chain is Protein P from Hepatitis B virus genotype E subtype ayw4 (isolate Kou) (HBV-E).